Here is a 326-residue protein sequence, read N- to C-terminus: Endochitinase (326 aa).

Positions 1–25 (MVYCTASLPLLLLLLVGLLAGEAFA) are cleaved as a signal peptide. Residues 26–66 (EQCGRQAGGALCPGGLCCSQFGWCGSTSDYCGPTCQSQCGG) form the Chitin-binding type-1 domain. Disulfide bonds link C28–C43, C37–C49, C42–C56, C60–C64, C96–C158, C170–C178, and C277–C309. Catalysis depends on E140, which acts as the Proton donor.

It belongs to the glycosyl hydrolase 19 family. Chitinase class I subfamily. In terms of tissue distribution, expressed in the pulp of the fruit (at protein level). Expressed in mesocarp (at protein level).

The enzyme catalyses Random endo-hydrolysis of N-acetyl-beta-D-glucosaminide (1-&gt;4)-beta-linkages in chitin and chitodextrins.. Functionally, defense against chitin-containing fungal pathogens. Has in vitro antifungal activity against F.oxysporum inhibiting its growth and the branching of its hyphae. Has endochitinase activity, but no exochitinase or lysozyme activities. The sequence is that of Endochitinase from Persea americana (Avocado).